Reading from the N-terminus, the 157-residue chain is Protein UXT (157 aa).

The protein belongs to the UXT family. As to quaternary structure, homohexamer. Component of the PAQosome complex which is responsible for the biogenesis of several protein complexes and which consists of R2TP complex members RUVBL1, RUVBL2, RPAP3 and PIH1D1, URI complex members PFDN2, PFDN6, PDRG1, UXT and URI1 as well as ASDURF, POLR2E and DNAAF10/WDR92. Interacts with LRPPRC. Interacts with androgen receptor AR (via N-terminus). Interacts with estrogen receptor ESR1; the interaction relocalizes ESR1 to the cytoplasm. In the nucleus, interacts specifically with RELA (via RHD domain) and forms a dynamic complex with NF-kappa-B and is recruited to the NF-kappa-B enhanceosome upon stimulation. Interacts with MECOM. Interacts with URI1.

The protein localises to the cytoplasm. It is found in the nucleus. The protein resides in the cytoskeleton. It localises to the microtubule organizing center. Its subcellular location is the centrosome. The protein localises to the spindle pole. Its function is as follows. Involved in gene transcription regulation. Acts in concert with the corepressor URI1 to regulate androgen receptor AR-mediated transcription. Together with URI1, associates with chromatin to the NKX3-1 promoter region. Negatively regulates the transcriptional activity of the estrogen receptor ESR1 by inducing its translocation into the cytoplasm. May act as nuclear chaperone that facilitates the formation of the NF-kappa-B enhanceosome and thus positively regulates NF-kappa-B transcription activity. Potential component of mitochondrial-associated LRPPRC, a multidomain organizer that potentially integrates mitochondria and the microtubular cytoskeleton with chromosome remodeling. Increasing concentrations of UXT contributes to progressive aggregation of mitochondria and cell death potentially through its association with LRPPRC. Suppresses cell transformation and it might mediate this function by interaction and inhibition of the biological activity of cell proliferation and survival stimulatory factors like MECOM. This Rattus norvegicus (Rat) protein is Protein UXT (Uxt).